A 667-amino-acid chain; its full sequence is UvrABC system protein B (667 aa).

Positions 25 to 180 (DSLQNQHRFQ…LLRALVSVQY (156 aa)) constitute a Helicase ATP-binding domain. 38 to 45 (GATGTGKT) serves as a coordination point for ATP. The Beta-hairpin signature appears at 91-114 (YYDYYQPEAYIPVSDTYIEKSSSI). Residues 429-595 (QVDDLLGEIK…PIVKRSSNSI (167 aa)) enclose the Helicase C-terminal domain. Positions 626 to 661 (PELIQQLEAQMKEAAKNLEFESAAKYRDRIKQLRDK) constitute a UVR domain.

Belongs to the UvrB family. In terms of assembly, forms a heterotetramer with UvrA during the search for lesions. Interacts with UvrC in an incision complex.

Its subcellular location is the cytoplasm. Functionally, the UvrABC repair system catalyzes the recognition and processing of DNA lesions. A damage recognition complex composed of 2 UvrA and 2 UvrB subunits scans DNA for abnormalities. Upon binding of the UvrA(2)B(2) complex to a putative damaged site, the DNA wraps around one UvrB monomer. DNA wrap is dependent on ATP binding by UvrB and probably causes local melting of the DNA helix, facilitating insertion of UvrB beta-hairpin between the DNA strands. Then UvrB probes one DNA strand for the presence of a lesion. If a lesion is found the UvrA subunits dissociate and the UvrB-DNA preincision complex is formed. This complex is subsequently bound by UvrC and the second UvrB is released. If no lesion is found, the DNA wraps around the other UvrB subunit that will check the other stand for damage. In Microcystis aeruginosa (strain NIES-843 / IAM M-2473), this protein is UvrABC system protein B.